An 85-amino-acid chain; its full sequence is UPF0512 protein U (85 aa).

It belongs to the UPF0512 family.

This Dictyostelium discoideum (Social amoeba) protein is UPF0512 protein U.